A 608-amino-acid polypeptide reads, in one-letter code: Actin-related protein 8 (608 aa).

The disordered stretch occupies residues M1–V20. D272 to A275 serves as a coordination point for ATP.

Belongs to the actin family. ARP8 subfamily. As to quaternary structure, component of the chromatin remodeling Ino80 complex. Exists as monomers and dimers, but the dimer is most probably the biologically relevant form required for stable interactions with histones that exploits the twofold symmetry of the nucleosome core.

It localises to the nucleus. Plays an important role in the functional organization of mitotic chromosomes. Exhibits low basal ATPase activity, and unable to polymerize. Functionally, proposed core component of the chromatin remodeling INO80 complex which is involved in transcriptional regulation, DNA replication and probably DNA repair. Strongly prefer nucleosomes and H3-H4 tetramers over H2A-H2B dimers, suggesting it may act as a nucleosome recognition module within the complex. The protein is Actin-related protein 8 of Drosophila pseudoobscura pseudoobscura (Fruit fly).